A 365-amino-acid polypeptide reads, in one-letter code: DNA replication and repair protein RecF (365 aa).

Gly-30–Thr-37 lines the ATP pocket.

The protein belongs to the RecF family.

It is found in the cytoplasm. Its function is as follows. The RecF protein is involved in DNA metabolism; it is required for DNA replication and normal SOS inducibility. RecF binds preferentially to single-stranded, linear DNA. It also seems to bind ATP. The sequence is that of DNA replication and repair protein RecF from Azotobacter vinelandii (strain DJ / ATCC BAA-1303).